The primary structure comprises 152 residues: Transcriptional regulator MraZ (152 aa).

2 SpoVT-AbrB domains span residues 5 to 52 and 81 to 124; these read ASAI…PIQE and AHEC…DEAA.

It belongs to the MraZ family. Forms oligomers.

It localises to the cytoplasm. The protein localises to the nucleoid. This Shewanella halifaxensis (strain HAW-EB4) protein is Transcriptional regulator MraZ.